We begin with the raw amino-acid sequence, 262 residues long: uncharacterized protein (262 aa).

Residues 13-35 form a helical membrane-spanning segment; that stretch reads VVGALLTVVVIVTAAGIIYVISH.

The protein resides in the membrane. This is an uncharacterized protein from Archaeoglobus fulgidus (strain ATCC 49558 / DSM 4304 / JCM 9628 / NBRC 100126 / VC-16).